We begin with the raw amino-acid sequence, 224 residues long: Octanoyl-[acyl-carrier-protein]:protein N-octanoyltransferase LIPT2, mitochondrial (224 aa).

In terms of domain architecture, BPL/LPL catalytic spans 37–217; the sequence is SNIPNTLLLC…AFTEQFNCTL (181 aa). Substrate contacts are provided by residues 81 to 88, 147 to 149, and 160 to 162; these read RGGLITFH, AIG, and GLA. C178 functions as the Acyl-thioester intermediate in the catalytic mechanism.

Belongs to the LipB family.

Its subcellular location is the mitochondrion. It carries out the reaction octanoyl-[ACP] + L-lysyl-[protein] = N(6)-octanoyl-L-lysyl-[protein] + holo-[ACP] + H(+). It functions in the pathway protein modification; protein lipoylation via endogenous pathway; protein N(6)-(lipoyl)lysine from octanoyl-[acyl-carrier-protein]: step 1/2. In terms of biological role, catalyzes the transfer of endogenously produced octanoic acid from octanoyl-acyl-carrier-protein (octanoyl-ACP) onto the lipoyl domains of lipoate-dependent enzymes such as the protein H of the glycine cleavage system (GCSH). Lipoyl-ACP can also act as a substrate although octanoyl-ACP is likely to be the physiological substrate. The protein is Octanoyl-[acyl-carrier-protein]:protein N-octanoyltransferase LIPT2, mitochondrial (lipt2) of Danio rerio (Zebrafish).